The following is a 165-amino-acid chain: uncharacterized protein (165 aa).

Residues 15–35 (MSPAIILIGVLILIVLFVIKF) traverse the membrane as a helical segment. The stretch at 67–119 (ISQLNTLRATLAAKKKELKTLRTARKKECTEQLAKTQAEVDRIQAKIDNFSSR) forms a coiled coil. Positions 123–156 (VPLPGGEVGPPYNPPPPRTNTRPNPRPNPRPAQL) are disordered. Positions 133-154 (PYNPPPPRTNTRPNPRPNPRPA) are enriched in pro residues.

It localises to the membrane. This is an uncharacterized protein from Acheta domesticus (House cricket).